Consider the following 780-residue polypeptide: MATSNLLKNKGSLQFEDKWDFMHPIVLKLLRQESVTKQQWFDLFSDVHAVCLWDDKGSSKIHQALKEDILEFIKQAQARVLSHQDDTALLKAYIVEWRKFFTQCDILPKPFCQLEVTLLGKQSSNKKSNMEDSIVRKLMLDTWNESIFSNIKNRLQDSAMKLVHAERLGEAFDSQLVIGVRESYVNLCSNPEDKLQIYRDNFEKAYLDSTERFYRTQAPSYLQQNGVQNYMKYADAKLKEEEKRALRYLETRRECNSVEALMECCVNALVTSFKETILAECQGMIKRNETEKLHLMFSLMDKVPNGIEPMLKDLEEHIISAGLADMVAAAETITTDSEKYVEQLLTLFNRFSKLVKEAFQDDPRFLTARDKAYKAVVNDATIFKLELPLKQKGVGLKTQPESKCPELLANYCDMLLRKTPLSKKLTSEEIEAKLKEVLLVLKYVQNKDVFMRYHKAHLTRRLILDISADSEIEENMVEWLREVGMPADYVNKLARMFQDIKVSEDLNQAFKEMHKNNKLALPADSVNIKILNAGAWSRSSEKVFVSLPTELEDLIPEVEEFYKKNHSGRKLHWHHLMSNGIITFKNEVGQYDLEVTTFQLAVLFAWNQRPREKISFENLKLATELPDAELRRTLWSLVAFPKLKRQVLLYDPQVNSPKDFTEGTLFSVNQDFSLIKNAKVQKRGKINLIGRLQLTTERMREEENEGIVQLRILRTQEAIIQIMKMRKKISNAQLQTELVEILKNMFLPQKKMIKEQMEWLIEHRYIRRDEADINTFIYMA.

Position 34 is a phosphoserine (serine 34). A Phosphothreonine modification is found at threonine 210. Residues 711–772 (RILRTQEAII…HRYIRRDEAD (62 aa)) enclose the Cullin neddylation domain. Residue lysine 724 forms a Glycyl lysine isopeptide (Lys-Gly) (interchain with G-Cter in NEDD8) linkage.

Belongs to the cullin family. In terms of assembly, component of multiple cullin-5-RING E3 ubiquitin-protein ligase complexes (ECS complexes, also named CRL5 complexes) formed of CUL5, Elongin BC (ELOB and ELOC), RNF7/RBX2 and a variable SOCS box domain-containing protein as substrate-specific recognition component. CUL5-containing ECS complexes specifically contain RNF7/RBX2, and not RBX1, as catalytic subunit. Component of the ECS(ASB2) complex with the substrate recognition component ASB2. Component of the ECS(ASB6) complex with the substrate recognition component ASB6. Component of the ECS(ASB7) complex with the substrate recognition component ASB7. Component of the ECS(ASB9) complex with the substrate recognition component ASB9. Component of the ECS(ASB11) complex with the substrate recognition component ASB11. Component of the ECS(ASB12) complex with the substrate recognition component ASB12. Component of the ECS(LRRC41) complex with the substrate recognition component LRRC41. Component of the ECS(SOCS1) complex with the substrate recognition component SOCS1. Component of the ECS(SOCS2) complex with the substrate recognition component SOCS2. Component of the ECS(WSB1) complex with the substrate recognition subunit WSB1. Component of the ECS(SOCS3) complex with the substrate recognition component SOCS3. Component of the ECS(SOCS7) complex with the substrate recognition component SOCS7. Component of the ECS(SPSB1) complex with the substrate recognition component SPSB1. Component of the ECS(SPSB3) complex with the substrate recognition component SPSB3. Component of the ECS(SPSB2) complex with the substrate recognition component SPSB2. Component of the ECS(SPSB4) complex with the substrate recognition component SPSB4. Component of the ECS(RAB40) complex with the substrate recognition subunit RAB40A, RAB40B or RAB40C. Component of the ECS(KLHDC1) complex with the substrate recognition component KLHDC1. Component of the ECS(PCMTD1) complex with the substrate recognition subunit PCMTD1. May also form complexes containing RBX1 and ELOA or VHL; additional evidence is however required to confirm this result in vivo. Interacts (when neddylated) with ARIH2; leading to activate the E3 ligase activity of ARIH2. Interacts with ERCC6; the interaction is induced by DNA damaging agents or inhibitors of RNA polymerase II elongation. Interacts with ELOA (via the BC-box). Interacts (unneddylated form) with DCUN1D1, DCUN1D2, DCUN1D3, DCUN1D4 and DCUN1D5; these interactions promote the cullin neddylation. Post-translationally, neddylated; which enhances the ubiquitination activity of ECS complexes and prevents binding of the inhibitor CAND1. Deneddylated via its interaction with the COP9 signalosome (CSN).

The protein resides in the nucleus. It participates in protein modification; protein ubiquitination. In terms of biological role, core component of multiple cullin-5-RING E3 ubiquitin-protein ligase complexes (ECS complexes, also named CRL5 complexes), which mediate the ubiquitination and subsequent proteasomal degradation of target proteins. Acts a scaffold protein that contributes to catalysis through positioning of the substrate and the ubiquitin-conjugating enzyme. The functional specificity of the E3 ubiquitin-protein ligase complex depends on the variable SOCS box-containing substrate recognition component. Acts as a key regulator of neuron positioning during cortex development: component of various SOCS-containing ECS complexes, such as the ECS(SOCS7) complex, that regulate reelin signaling by mediating ubiquitination and degradation of DAB1. ECS(SOCS1) seems to direct ubiquitination of JAK2. The ECS(SOCS2) complex mediates the ubiquitination and subsequent proteasomal degradation of phosphorylated EPOR and GHR. The ECS(SPSB3) complex catalyzes ubiquitination of nuclear CGAS. ECS(KLHDC1) complex is part of the DesCEND (destruction via C-end degrons) pathway and mediates ubiquitination and degradation of truncated SELENOS selenoprotein produced by failed UGA/Sec decoding, which ends with a glycine. The ECS(ASB9) complex mediates ubiquitination and degradation of CKB. As part of some ECS complex, promotes 'Lys-11'-linked ubiquitination and degradation of BTRC. As part of a multisubunit ECS complex, polyubiquitinates monoubiquitinated POLR2A. As part of the ECS(RAB40C) complex, mediates ANKRD28 ubiquitination and degradation, thereby regulating protein phosphatase 6 (PP6) complex activity and focal adhesion assembly during cell migration. As part of the ECS(RAB40A) complex, mediates RHOU 'Lys-48'-linked ubiquitination and degradation, thus inhibiting focal adhesion disassembly during cell migration. As part of the ECS(RAB40B) complex, mediates LIMA1/EPLIN and RAP2 ubiquitination, thereby regulating actin cytoskeleton dynamics and stress fiber formation during cell migration. May form a cell surface vasopressin receptor. In Mus musculus (Mouse), this protein is Cullin-5.